A 482-amino-acid chain; its full sequence is GTPase Der (482 aa).

EngA-type G domains lie at 3–166 and 195–368; these read PVVA…SEQF and IKLA…NSAT. GTP is bound by residues 9 to 16, 56 to 60, 118 to 121, 201 to 208, 248 to 252, and 313 to 316; these read GRPNVGKS, DTGGI, NKVD, GKPNVGKS, DTAGV, and NKWD. The KH-like domain maps to 369–453; sequence KRINTSMLTR…PIKVEFREGA (85 aa).

Belongs to the TRAFAC class TrmE-Era-EngA-EngB-Septin-like GTPase superfamily. EngA (Der) GTPase family. In terms of assembly, associates with the 50S ribosomal subunit.

In terms of biological role, GTPase that plays an essential role in the late steps of ribosome biogenesis. The polypeptide is GTPase Der (Pseudoalteromonas atlantica (strain T6c / ATCC BAA-1087)).